Here is a 427-residue protein sequence, read N- to C-terminus: MVTSCCSGSMSEAGHILDGLAEHARRASRSLARANAGTRNHALSEAAKALRVRSDEIVAANQKDLAALSEDRNAAFRDRLTLTPERVEAMARGLEDVAGLPDPVGRVLAEWDRPNGLHFRRVATPLGVIGMIYESRPNVGADAAALCIKSGNAVILRGGGESLHSARAIQAAMEDGLRAAGLDEACVQILPSADRALVGAMLQASGKIDLIIPRGGKSLVERVQREARVPVLAHADGLNHTYIHASADPAMARKILLDAKMRRTGICGATETLLIDAAIAPALLPLLVEDLAAKGCTFRADDRARAIVPTLAAASADDFDTEWLDAVLSVAVVDGVEDALDHIARHGSSHTEAIIAEDPEAAAEFLNGTDSAVVMWNASTQFCDGGEFGFGAEIGIATGRMHARGPVGLEQLTCYRYEVIGTGQVRG.

The protein belongs to the gamma-glutamyl phosphate reductase family.

It is found in the cytoplasm. The catalysed reaction is L-glutamate 5-semialdehyde + phosphate + NADP(+) = L-glutamyl 5-phosphate + NADPH + H(+). Its pathway is amino-acid biosynthesis; L-proline biosynthesis; L-glutamate 5-semialdehyde from L-glutamate: step 2/2. In terms of biological role, catalyzes the NADPH-dependent reduction of L-glutamate 5-phosphate into L-glutamate 5-semialdehyde and phosphate. The product spontaneously undergoes cyclization to form 1-pyrroline-5-carboxylate. In Gluconobacter oxydans (strain 621H) (Gluconobacter suboxydans), this protein is Gamma-glutamyl phosphate reductase.